A 238-amino-acid polypeptide reads, in one-letter code: Ribonuclease PH (238 aa).

Residues Arg86 and 124 to 126 contribute to the phosphate site; that span reads GTR.

This sequence belongs to the RNase PH family. Homohexameric ring arranged as a trimer of dimers.

It carries out the reaction tRNA(n+1) + phosphate = tRNA(n) + a ribonucleoside 5'-diphosphate. Its function is as follows. Phosphorolytic 3'-5' exoribonuclease that plays an important role in tRNA 3'-end maturation. Removes nucleotide residues following the 3'-CCA terminus of tRNAs; can also add nucleotides to the ends of RNA molecules by using nucleoside diphosphates as substrates, but this may not be physiologically important. Probably plays a role in initiation of 16S rRNA degradation (leading to ribosome degradation) during starvation. This is Ribonuclease PH from Edwardsiella ictaluri (strain 93-146).